A 116-amino-acid polypeptide reads, in one-letter code: Large ribosomal subunit protein bL19 (116 aa).

It belongs to the bacterial ribosomal protein bL19 family.

Functionally, this protein is located at the 30S-50S ribosomal subunit interface and may play a role in the structure and function of the aminoacyl-tRNA binding site. This Fusobacterium nucleatum subsp. nucleatum (strain ATCC 25586 / DSM 15643 / BCRC 10681 / CIP 101130 / JCM 8532 / KCTC 2640 / LMG 13131 / VPI 4355) protein is Large ribosomal subunit protein bL19.